The following is a 90-amino-acid chain: Large ribosomal subunit protein uL23c (90 aa).

It belongs to the universal ribosomal protein uL23 family. In terms of assembly, part of the 50S ribosomal subunit.

The protein localises to the plastid. It is found in the chloroplast. Functionally, binds to 23S rRNA. In Psilotum nudum (Whisk fern), this protein is Large ribosomal subunit protein uL23c (rpl23).